A 356-amino-acid polypeptide reads, in one-letter code: tRNA N6-adenosine threonylcarbamoyltransferase (356 aa).

Fe cation is bound by residues His-116 and His-120. Substrate contacts are provided by residues 139–143 (IVSGG), Asp-174, Gly-187, Asp-191, and Asn-281. A Fe cation-binding site is contributed by Asp-309.

It belongs to the KAE1 / TsaD family. It depends on Fe(2+) as a cofactor.

Its subcellular location is the cytoplasm. The enzyme catalyses L-threonylcarbamoyladenylate + adenosine(37) in tRNA = N(6)-L-threonylcarbamoyladenosine(37) in tRNA + AMP + H(+). In terms of biological role, required for the formation of a threonylcarbamoyl group on adenosine at position 37 (t(6)A37) in tRNAs that read codons beginning with adenine. Is involved in the transfer of the threonylcarbamoyl moiety of threonylcarbamoyl-AMP (TC-AMP) to the N6 group of A37, together with TsaE and TsaB. TsaD likely plays a direct catalytic role in this reaction. This Frankia alni (strain DSM 45986 / CECT 9034 / ACN14a) protein is tRNA N6-adenosine threonylcarbamoyltransferase.